A 30-amino-acid polypeptide reads, in one-letter code: Sillucin (30 aa).

Cystine bridges form between Cys-2–Cys-7, Cys-12–Cys-24, Cys-13–Cys-30, and Cys-14–Cys-21.

Its subcellular location is the secreted. Its function is as follows. Sillucin is an antimicrobial agent produced by the thermophilic fungus Rhizomucor pusillus in liquid culture; it is effective against Gram-positive bacteria at the level of RNA metabolism. This is Sillucin from Rhizomucor pusillus.